The following is a 169-amino-acid chain: MGLFDKLKSLVSDDKKDTGTIEIIAPLSGEIVNIEDVPDVVFAEKIVGDGIAIKPTGNKMVAPVDGTIGKIFETNHAFSIESDSGVELFVHFGIDTVELKGEGFKRIAEEGQRVKVGDTVIEFDLPLLEEKAKSTLTPVVISNMDEIKELIKLSGSVTVGETPVIRIKK.

A PTS EIIA type-1 domain is found at 39-143 (DVVFAEKIVG…STLTPVVISN (105 aa)). The Zn(2+) site is built by histidine 76 and histidine 91. Histidine 91 acts as the Tele-phosphohistidine intermediate; for EIIA activity in catalysis. Residue histidine 91 is modified to Phosphohistidine; by HPr.

Heterodimer with glycerol kinase (glpk). The cofactor is Zn(2+).

It localises to the cytoplasm. The phosphoenolpyruvate-dependent sugar phosphotransferase system (sugar PTS), a major carbohydrate active transport system, catalyzes the phosphorylation of incoming sugar substrates concomitantly with their translocation across the cell membrane. The enzyme II complex composed of PtsG and Crr is involved in glucose transport. The polypeptide is PTS system glucose-specific EIIA component (crr) (Escherichia coli O6:H1 (strain CFT073 / ATCC 700928 / UPEC)).